A 449-amino-acid polypeptide reads, in one-letter code: MSKFSPPINRNMVELDRSFFYKEVPLLAAYFPNPKFLGQFVKSCQNDILYVQTVKHIISMDDSKAILLRDDVKSISDLNPETQLKINEFGIILKPYTLKLDYSFWKSEEILKSILPENLIDDVPSGFSQAGHLAHINLRDEYKPFGKLIGQVILDKNPSVLTVVDKVNTIANKFRTFPLELLAGEPNYIVEQSESGCKFKFDFSKVYWNSRLSTEHERIIGKFNPGDVVGDVFGGVGPFAIPASKKNVIVLANDLNPESYKYLQENIKINKVEPFIKPFNLDGREFIRKAPELLLQWHNSQNGIIEKIIIKKVSIDDNKTKKIFERKPIIETTKIPKFYHHFVMNLPDSALTFLDEFIGLYGSNPQLKTDPEFKLPIIHVHCFEKFENNENPTPEELHNRVYEKICKLIQFPLNKKKVEFHEVRMVSPTKPMFCVSFELPEEVAFKQTK.

S-adenosyl-L-methionine-binding positions include His-216, 254–255, 282–283, and Asn-345; these read DL and DG.

The protein belongs to the class I-like SAM-binding methyltransferase superfamily. TRM5/TYW2 family. As to quaternary structure, monomer.

It is found in the mitochondrion matrix. The protein localises to the nucleus. The protein resides in the cytoplasm. The catalysed reaction is guanosine(37) in tRNA + S-adenosyl-L-methionine = N(1)-methylguanosine(37) in tRNA + S-adenosyl-L-homocysteine + H(+). Functionally, specifically methylates the N1 position of guanosine-37 in various cytoplasmic and mitochondrial tRNAs. Methylation is not dependent on the nature of the nucleoside 5' of the target nucleoside. This is the first step in the biosynthesis of wybutosine (yW), a modified base adjacent to the anticodon of tRNAs and required for accurate decoding. This is tRNA (guanine(37)-N(1))-methyltransferase from Candida albicans (strain WO-1) (Yeast).